Reading from the N-terminus, the 231-residue chain is Large ribosomal subunit protein uL1 (231 aa).

Belongs to the universal ribosomal protein uL1 family. As to quaternary structure, part of the 50S ribosomal subunit.

Its function is as follows. Binds directly to 23S rRNA. The L1 stalk is quite mobile in the ribosome, and is involved in E site tRNA release. Protein L1 is also a translational repressor protein, it controls the translation of the L11 operon by binding to its mRNA. The sequence is that of Large ribosomal subunit protein uL1 from Pseudomonas syringae pv. tomato (strain ATCC BAA-871 / DC3000).